Consider the following 688-residue polypeptide: Polyribonucleotide nucleotidyltransferase (688 aa).

Mg(2+)-binding residues include D484 and D490. Residues 550–609 (PTTEIFNVAPDKIVEIIGQGGRVIKEIVEKFEVKIDLNKPSGEVKIMGNKERVLKTKEFI) form the KH domain. Residues 626–688 (DEVLEAQVKR…NKGKIALDLA (63 aa)) enclose the S1 motif domain.

It belongs to the polyribonucleotide nucleotidyltransferase family. Mg(2+) is required as a cofactor.

The protein localises to the cytoplasm. It catalyses the reaction RNA(n+1) + phosphate = RNA(n) + a ribonucleoside 5'-diphosphate. Involved in mRNA degradation. Catalyzes the phosphorolysis of single-stranded polyribonucleotides processively in the 3'- to 5'-direction. The protein is Polyribonucleotide nucleotidyltransferase of Helicobacter pylori (strain ATCC 700392 / 26695) (Campylobacter pylori).